Here is a 413-residue protein sequence, read N- to C-terminus: Tryptophan synthase beta chain 2 (413 aa).

The residue at position 107 (Lys107) is an N6-(pyridoxal phosphate)lysine.

It belongs to the TrpB family. In terms of assembly, tetramer of two alpha and two beta chains. The cofactor is pyridoxal 5'-phosphate.

The catalysed reaction is (1S,2R)-1-C-(indol-3-yl)glycerol 3-phosphate + L-serine = D-glyceraldehyde 3-phosphate + L-tryptophan + H2O. It functions in the pathway amino-acid biosynthesis; L-tryptophan biosynthesis; L-tryptophan from chorismate: step 5/5. Functionally, the beta subunit is responsible for the synthesis of L-tryptophan from indole and L-serine. The sequence is that of Tryptophan synthase beta chain 2 (trpB2) from Nostoc sp. (strain PCC 7120 / SAG 25.82 / UTEX 2576).